Reading from the N-terminus, the 100-residue chain is Urease subunit gamma (100 aa).

This sequence belongs to the urease gamma subunit family. In terms of assembly, heterotrimer of UreA (gamma), UreB (beta) and UreC (alpha) subunits. Three heterotrimers associate to form the active enzyme.

It localises to the cytoplasm. It carries out the reaction urea + 2 H2O + H(+) = hydrogencarbonate + 2 NH4(+). It functions in the pathway nitrogen metabolism; urea degradation; CO(2) and NH(3) from urea (urease route): step 1/1. The chain is Urease subunit gamma from Paenarthrobacter aurescens (strain TC1).